We begin with the raw amino-acid sequence, 573 residues long: Trehalose synthase (573 aa).

Position 70 (Asp-70) interacts with substrate. Asn-112 contacts Ca(2+). The substrate site is built by His-113 and Gln-178. Asp-180 contributes to the Ca(2+) binding site. Arg-208 serves as a coordination point for substrate. Residue Asp-210 is the Nucleophile of the active site. Residues Tyr-214, Leu-215, and Glu-217 each coordinate Ca(2+). The active-site Proton donor is Glu-252. Residues His-326 and Asp-327 each contribute to the substrate site.

Belongs to the glycosyl hydrolase 13 family. TreS subfamily.

It catalyses the reaction D-maltose = alpha,alpha-trehalose. Catalyzes the reversible interconversion of maltose and alpha,alpha-trehalose by transglucosylation. This chain is Trehalose synthase (treS), found in Pimelobacter sp. (strain R48).